The chain runs to 179 residues: Archaemetzincin (179 aa).

His-128 contributes to the Zn(2+) binding site. Glu-129 acts as the Proton acceptor in catalysis. 6 residues coordinate Zn(2+): His-132, His-138, Cys-139, Cys-144, Cys-163, and Cys-166.

This sequence belongs to the peptidase M54 family. Monomer. Zn(2+) serves as cofactor.

Functionally, probable zinc metalloprotease whose natural substrate is unknown. The sequence is that of Archaemetzincin from Methanocaldococcus jannaschii (strain ATCC 43067 / DSM 2661 / JAL-1 / JCM 10045 / NBRC 100440) (Methanococcus jannaschii).